Reading from the N-terminus, the 190-residue chain is Ribosome-recycling factor (190 aa).

The protein belongs to the RRF family.

It is found in the cytoplasm. In terms of biological role, responsible for the release of ribosomes from messenger RNA at the termination of protein biosynthesis. May increase the efficiency of translation by recycling ribosomes from one round of translation to another. The polypeptide is Ribosome-recycling factor (Fusobacterium nucleatum subsp. nucleatum (strain ATCC 25586 / DSM 15643 / BCRC 10681 / CIP 101130 / JCM 8532 / KCTC 2640 / LMG 13131 / VPI 4355)).